A 4538-amino-acid polypeptide reads, in one-letter code: Polyketide synthase PksL (4538 aa).

The segment at 1–123 is N-terminal hotdog fold 1; that stretch reads MRWRSNVKKI…ADMHADSPAI (123 aa). The region spanning 1 to 285 is the PKS/mFAS DH 1 domain; sequence MRWRSNVKKI…SKLVREAELI (285 aa). Histidine 26 functions as the Proton acceptor; for dehydratase activity 1 in the catalytic mechanism. Positions 138–285 are C-terminal hotdog fold 1; it reads QNVVQLDDVY…SKLVREAELI (148 aa). The active-site Proton donor; for dehydratase activity 1 is aspartate 199. Positions 289–314 are disordered; sequence HQDAQETQMTRADTAERDKPADMVSS. One can recognise a Carrier 1 domain in the interval 320–394; that stretch reads SEAEQFVSQL…ELSAFLAEEY (75 aa). At serine 354 the chain carries O-(pantetheine 4'-phosphoryl)serine. Positions 433-871 constitute a Ketosynthase family 3 (KS3) 1 domain; sequence AGDIAIIGLA…GSNAHIILEE (439 aa). Catalysis depends on for beta-ketoacyl synthase 1 activity residues cysteine 609, histidine 744, and histidine 784. A dehydratase region spans residues 1048-1226; sequence HILHPLLHQN…DSLYAGENGV (179 aa). Residues 1051 to 1175 form an N-terminal hotdog fold 2 region; that stretch reads HPLLHQNVSD…GSAVLCEAGE (125 aa). The PKS/mFAS DH 2 domain maps to 1051 to 1340; sequence HPLLHQNVSD…ARVLETDQEG (290 aa). Histidine 1080 serves as the catalytic Proton acceptor; for dehydratase activity 2. The tract at residues 1189 to 1340 is C-terminal hotdog fold 2; sequence NGRTLSPFDC…ARVLETDQEG (152 aa). Residue aspartate 1251 is the Proton donor; for dehydratase activity 2 of the active site. Residues 1520–1713 form a beta-ketoacyl reductase 1 region; the sequence is KGVYLITGGA…WKDGGMQIDA (194 aa). Residues 1800–1873 enclose the Carrier 2 domain; the sequence is EKAENYFKQV…SLTRYFIDSR (74 aa). Serine 1834 is modified (O-(pantetheine 4'-phosphoryl)serine). The Ketosynthase family 3 (KS3) 2 domain occupies 1926–2365; it reads TEEIAIIGIS…GVNAHILIEE (440 aa). Active-site for beta-ketoacyl synthase 2 activity residues include cysteine 2103, histidine 2238, and histidine 2278. The segment at 2546 to 2568 is disordered; that stretch reads TEEPFAPVQPVIPKPSVDREASG. Carrier domains are found at residues 2597–2674 and 2738–2815; these read ITAE…AHEL and VAIE…KSEL. 2 positions are modified to O-(pantetheine 4'-phosphoryl)serine: serine 2634 and serine 2775. The disordered stretch occupies residues 2828-2854; it reads SFEAAQQKPAASSHPKPAERPLQPVQH. One can recognise a Ketosynthase family 3 (KS3) 3 domain in the interval 2873–3294; it reads EDAIAIVGMS…GTNAHIVIEE (422 aa). Active-site for beta-ketoacyl synthase 3 activity residues include cysteine 3040, histidine 3175, and histidine 3215. The segment at 3686 to 3887 is beta-ketoacyl reductase 2; that stretch reads DKVLLITGGT…PNWKETGLGE (202 aa). The 78-residue stretch at 3960 to 4037 folds into the Carrier 5 domain; it reads NLFPETVDWL…SFAHWLISKY (78 aa). Serine 3997 is modified (O-(pantetheine 4'-phosphoryl)serine). The Ketosynthase family 3 (KS3) 4 domain occupies 4082–4485; it reads AEDIAIIGLS…GTNAHLIIEG (404 aa). The For beta-ketoacyl synthase 4 activity role is filled by cysteine 4237.

Requires pantetheine 4'-phosphate as cofactor.

Its subcellular location is the cytoplasm. It functions in the pathway antibiotic biosynthesis; bacillaene biosynthesis. Functionally, involved in some intermediate steps for the synthesis of the antibiotic polyketide bacillaene which is involved in secondary metabolism. The protein is Polyketide synthase PksL (pksL) of Bacillus subtilis (strain 168).